A 475-amino-acid chain; its full sequence is Bifunctional protein HldE (475 aa).

Residues 1-318 (MKITLPEFEK…ANALYTEQET (318 aa)) are ribokinase. Residue 195 to 198 (NMSE) coordinates ATP. The active site involves aspartate 264. The tract at residues 344 to 475 (MTNGCFDILH…DIIKTIRERG (132 aa)) is cytidylyltransferase.

The protein in the N-terminal section; belongs to the carbohydrate kinase PfkB family. This sequence in the C-terminal section; belongs to the cytidylyltransferase family. As to quaternary structure, homodimer.

The catalysed reaction is D-glycero-beta-D-manno-heptose 7-phosphate + ATP = D-glycero-beta-D-manno-heptose 1,7-bisphosphate + ADP + H(+). It carries out the reaction D-glycero-beta-D-manno-heptose 1-phosphate + ATP + H(+) = ADP-D-glycero-beta-D-manno-heptose + diphosphate. It participates in nucleotide-sugar biosynthesis; ADP-L-glycero-beta-D-manno-heptose biosynthesis; ADP-L-glycero-beta-D-manno-heptose from D-glycero-beta-D-manno-heptose 7-phosphate: step 1/4. The protein operates within nucleotide-sugar biosynthesis; ADP-L-glycero-beta-D-manno-heptose biosynthesis; ADP-L-glycero-beta-D-manno-heptose from D-glycero-beta-D-manno-heptose 7-phosphate: step 3/4. Functionally, catalyzes the phosphorylation of D-glycero-D-manno-heptose 7-phosphate at the C-1 position to selectively form D-glycero-beta-D-manno-heptose-1,7-bisphosphate. In terms of biological role, catalyzes the ADP transfer from ATP to D-glycero-beta-D-manno-heptose 1-phosphate, yielding ADP-D-glycero-beta-D-manno-heptose. In Aeromonas hydrophila subsp. hydrophila (strain ATCC 7966 / DSM 30187 / BCRC 13018 / CCUG 14551 / JCM 1027 / KCTC 2358 / NCIMB 9240 / NCTC 8049), this protein is Bifunctional protein HldE.